The primary structure comprises 237 residues: Uridylate kinase (237 aa).

Residue 12-15 (KLSG) participates in ATP binding. The tract at residues 20–25 (GEDGLG) is involved in allosteric activation by GTP. G54 contacts UMP. Residues G55 and R59 each coordinate ATP. Residues D74 and 135–142 (TGNPFFTT) each bind UMP. 3 residues coordinate ATP: T162, Y168, and D171.

The protein belongs to the UMP kinase family. In terms of assembly, homohexamer.

Its subcellular location is the cytoplasm. It catalyses the reaction UMP + ATP = UDP + ADP. It functions in the pathway pyrimidine metabolism; CTP biosynthesis via de novo pathway; UDP from UMP (UMPK route): step 1/1. Allosterically activated by GTP. Inhibited by UTP. Its function is as follows. Catalyzes the reversible phosphorylation of UMP to UDP. The polypeptide is Uridylate kinase (Haemophilus influenzae (strain PittGG)).